The primary structure comprises 392 residues: Pectate lyase 3 (392 aa).

Residues 1–25 form the signal peptide; that stretch reads MGIKHCCYILYFTLALVTLLQPVRS. Residue Asn-37 is glycosylated (N-linked (GlcNAc...) asparagine). Cys-54 and Cys-71 are oxidised to a cystine. Ca(2+) contacts are provided by Asp-194, Asp-218, and Asp-222. Residue Arg-270 is part of the active site.

It belongs to the polysaccharide lyase 1 family. Amb a subfamily. In terms of assembly, monomer. Ca(2+) serves as cofactor. In terms of processing, the N-terminus is blocked. In terms of tissue distribution, pollen and flowers.

The enzyme catalyses Eliminative cleavage of (1-&gt;4)-alpha-D-galacturonan to give oligosaccharides with 4-deoxy-alpha-D-galact-4-enuronosyl groups at their non-reducing ends.. Its pathway is glycan metabolism; pectin degradation; 2-dehydro-3-deoxy-D-gluconate from pectin: step 2/5. In terms of biological role, has pectate lyase activity. This chain is Pectate lyase 3, found in Ambrosia artemisiifolia (Common ragweed).